The following is a 152-amino-acid chain: 3-hydroxyacyl-[acyl-carrier-protein] dehydratase FabZ (152 aa).

The active site involves H57.

The protein belongs to the thioester dehydratase family. FabZ subfamily.

The protein localises to the cytoplasm. The catalysed reaction is a (3R)-hydroxyacyl-[ACP] = a (2E)-enoyl-[ACP] + H2O. Involved in unsaturated fatty acids biosynthesis. Catalyzes the dehydration of short chain beta-hydroxyacyl-ACPs and long chain saturated and unsaturated beta-hydroxyacyl-ACPs. The chain is 3-hydroxyacyl-[acyl-carrier-protein] dehydratase FabZ from Bradyrhizobium sp. (strain BTAi1 / ATCC BAA-1182).